The following is a 224-amino-acid chain: uncharacterized protein (224 aa).

This sequence to M.tuberculosis Rv2558.

This is an uncharacterized protein from Mycobacterium tuberculosis (strain CDC 1551 / Oshkosh).